Here is a 193-residue protein sequence, read N- to C-terminus: Glycerol-3-phosphate acyltransferase (193 aa).

A run of 4 helical transmembrane segments spans residues 2–22 (LIAL…GLIV), 76–96 (VPIH…FPVF), 112–132 (LLFY…VFLF), and 152–172 (CLFV…AFVI).

Belongs to the PlsY family. Probably interacts with PlsX.

The protein resides in the cell membrane. It carries out the reaction an acyl phosphate + sn-glycerol 3-phosphate = a 1-acyl-sn-glycero-3-phosphate + phosphate. It participates in lipid metabolism; phospholipid metabolism. Catalyzes the transfer of an acyl group from acyl-phosphate (acyl-PO(4)) to glycerol-3-phosphate (G3P) to form lysophosphatidic acid (LPA). This enzyme utilizes acyl-phosphate as fatty acyl donor, but not acyl-CoA or acyl-ACP. This Bacillus velezensis (strain DSM 23117 / BGSC 10A6 / LMG 26770 / FZB42) (Bacillus amyloliquefaciens subsp. plantarum) protein is Glycerol-3-phosphate acyltransferase.